The chain runs to 431 residues: NADH-quinone oxidoreductase subunit D 2 (431 aa).

The interval methionine 1 to alanine 27 is disordered.

The protein belongs to the complex I 49 kDa subunit family. In terms of assembly, NDH-1 is composed of 14 different subunits. Subunits NuoB, C, D, E, F, and G constitute the peripheral sector of the complex.

The protein localises to the cell inner membrane. It catalyses the reaction a quinone + NADH + 5 H(+)(in) = a quinol + NAD(+) + 4 H(+)(out). Its function is as follows. NDH-1 shuttles electrons from NADH, via FMN and iron-sulfur (Fe-S) centers, to quinones in the respiratory chain. The immediate electron acceptor for the enzyme in this species is believed to be ubiquinone. Couples the redox reaction to proton translocation (for every two electrons transferred, four hydrogen ions are translocated across the cytoplasmic membrane), and thus conserves the redox energy in a proton gradient. In Anaeromyxobacter sp. (strain Fw109-5), this protein is NADH-quinone oxidoreductase subunit D 2.